We begin with the raw amino-acid sequence, 311 residues long: Ribosomal protein L11 methyltransferase (311 aa).

4 residues coordinate S-adenosyl-L-methionine: Thr-162, Gly-183, Asp-205, and Asn-248.

The protein belongs to the methyltransferase superfamily. PrmA family.

It localises to the cytoplasm. The enzyme catalyses L-lysyl-[protein] + 3 S-adenosyl-L-methionine = N(6),N(6),N(6)-trimethyl-L-lysyl-[protein] + 3 S-adenosyl-L-homocysteine + 3 H(+). Functionally, methylates ribosomal protein L11. The chain is Ribosomal protein L11 methyltransferase from Bacillus pumilus (strain SAFR-032).